A 320-amino-acid chain; its full sequence is Cytosolic Fe-S cluster assembly factor NUBP1 (320 aa).

Met-1 carries the N-acetylmethionine modification. [4Fe-4S] cluster-binding residues include Cys-8, Cys-22, Cys-25, and Cys-31. 62 to 69 (GKGGVGKS) contacts ATP. Positions 235 and 238 each coordinate [4Fe-4S] cluster.

Belongs to the Mrp/NBP35 ATP-binding proteins family. NUBP1/NBP35 subfamily. In terms of assembly, heterotetramer of 2 NUBP1 and 2 NUBP2 chains. Interacts with KIFC1. Interacts with the BBS/CCT complex subunit CCT1. [4Fe-4S] cluster is required as a cofactor.

It localises to the cytoplasm. The protein resides in the nucleus. The protein localises to the cell projection. It is found in the cytoskeleton. Its subcellular location is the cilium axoneme. It localises to the cilium basal body. The protein resides in the microtubule organizing center. The protein localises to the centrosome. It is found in the centriole. Its function is as follows. Component of the cytosolic iron-sulfur (Fe/S) protein assembly (CIA) machinery. Required for maturation of extramitochondrial Fe-S proteins. The NUBP1-NUBP2 heterotetramer forms a Fe-S scaffold complex, mediating the de novo assembly of an Fe-S cluster and its transfer to target apoproteins. Implicated in the regulation of centrosome duplication. Negatively regulates cilium formation and structure. In Bos taurus (Bovine), this protein is Cytosolic Fe-S cluster assembly factor NUBP1.